The chain runs to 530 residues: Inactive ubiquitin carboxyl-terminal hydrolase 17-like protein 8 (530 aa).

Positions 80-375 constitute a USP domain; that stretch reads AGLQNMGNTC…QAYVLFYIQK (296 aa). The span at 382 to 392 shows a compositional bias: basic and acidic residues; the sequence is SESVSRGREPR. Disordered stretches follow at residues 382 to 412 and 493 to 530; these read SESVSRGREPRALGAEDTDRPATQGELKRDH and NSTDQESMNTGTLASLQGRTRRSKGKNKHSKRSLLVCQ. Positions 495 to 510 are enriched in polar residues; sequence TDQESMNTGTLASLQG. Basic residues predominate over residues 511–524; the sequence is RTRRSKGKNKHSKR.

The protein belongs to the peptidase C19 family. USP17 subfamily.

The protein resides in the nucleus. Its subcellular location is the endoplasmic reticulum. The polypeptide is Inactive ubiquitin carboxyl-terminal hydrolase 17-like protein 8 (USP17L8) (Homo sapiens (Human)).